Consider the following 102-residue polypeptide: Urease subunit beta (102 aa).

The protein belongs to the urease beta subunit family. Heterotrimer of UreA (gamma), UreB (beta) and UreC (alpha) subunits. Three heterotrimers associate to form the active enzyme.

The protein localises to the cytoplasm. It carries out the reaction urea + 2 H2O + H(+) = hydrogencarbonate + 2 NH4(+). Its pathway is nitrogen metabolism; urea degradation; CO(2) and NH(3) from urea (urease route): step 1/1. The protein is Urease subunit beta of Bordetella pertussis (strain Tohama I / ATCC BAA-589 / NCTC 13251).